We begin with the raw amino-acid sequence, 396 residues long: S-adenosylmethionine synthase (396 aa).

Residue H14 coordinates ATP. D16 is a binding site for Mg(2+). E42 contributes to the K(+) binding site. The L-methionine site is built by E55 and Q98. The tract at residues 98 to 108 (QSPDIALGVNK) is flexible loop. ATP-binding positions include 174 to 176 (DGK), 241 to 242 (RF), D250, 256 to 257 (RK), A273, and K277. D250 lines the L-methionine pocket. K281 is an L-methionine binding site.

This sequence belongs to the AdoMet synthase family. Homotetramer; dimer of dimers. Mg(2+) serves as cofactor. The cofactor is K(+).

The protein localises to the cytoplasm. The catalysed reaction is L-methionine + ATP + H2O = S-adenosyl-L-methionine + phosphate + diphosphate. Its pathway is amino-acid biosynthesis; S-adenosyl-L-methionine biosynthesis; S-adenosyl-L-methionine from L-methionine: step 1/1. Its function is as follows. Catalyzes the formation of S-adenosylmethionine (AdoMet) from methionine and ATP. The overall synthetic reaction is composed of two sequential steps, AdoMet formation and the subsequent tripolyphosphate hydrolysis which occurs prior to release of AdoMet from the enzyme. The sequence is that of S-adenosylmethionine synthase from Pseudothermotoga lettingae (strain ATCC BAA-301 / DSM 14385 / NBRC 107922 / TMO) (Thermotoga lettingae).